The following is a 537-amino-acid chain: Lariat debranching enzyme (537 aa).

The a divalent metal cation site is built by Cys-8, His-10, Asp-39, and Asn-84. The segment at 124-154 is lariat recognition loop; sequence SGIYKGHDFLRGHHEFPPYTESTCRSVYHVR. Residues His-174, His-226, and His-228 each contribute to the a divalent metal cation site. Disordered regions lie at residues 242 to 272 and 473 to 537; these read KAPTKMGDGSSSSSSSSSSESDDEESTSRLP and TAAE…EDDD. Over residues 251–260 the composition is skewed to low complexity; that stretch reads SSSSSSSSSS.

This sequence belongs to the lariat debranching enzyme family. The cofactor is Fe(2+). Zn(2+) serves as cofactor. Requires Mn(2+) as cofactor.

It localises to the nucleus. With respect to regulation, active in presence of diverse metals including Fe(2+), Zn(2+), Mn(2+). Binds two metal cations in two adjacent alpha and beta metal-binding pockets. Functionally, cleaves the 2'-5' phosphodiester linkage at the branch point of lariat intron pre-mRNAs after splicing and converts them into linear molecules that are subsequently degraded. It thereby facilitates ribonucleotide turnover. The polypeptide is Lariat debranching enzyme (DBR1) (Drosophila pseudoobscura pseudoobscura (Fruit fly)).